The primary structure comprises 65 residues: Large ribosomal subunit protein bL35 (65 aa).

The interval 30 to 65 (AFRSHLAQNKSTKQKRQSKHGTFMHPTDYKRLKDLM) is disordered. The span at 56-65 (TDYKRLKDLM) shows a compositional bias: basic and acidic residues.

This sequence belongs to the bacterial ribosomal protein bL35 family.

In Mycoplasma mobile (strain ATCC 43663 / 163K / NCTC 11711) (Mesomycoplasma mobile), this protein is Large ribosomal subunit protein bL35.